We begin with the raw amino-acid sequence, 230 residues long: Orotidine 5'-phosphate decarboxylase (230 aa).

Substrate is bound by residues D8, K32, 59–68 (DLKLYDIPNT), T118, R178, Q187, G207, and R208. Catalysis depends on K61, which acts as the Proton donor.

The protein belongs to the OMP decarboxylase family. Type 1 subfamily. Homodimer.

The catalysed reaction is orotidine 5'-phosphate + H(+) = UMP + CO2. Its pathway is pyrimidine metabolism; UMP biosynthesis via de novo pathway; UMP from orotate: step 2/2. Its function is as follows. Catalyzes the decarboxylation of orotidine 5'-monophosphate (OMP) to uridine 5'-monophosphate (UMP). The sequence is that of Orotidine 5'-phosphate decarboxylase from Nautilia profundicola (strain ATCC BAA-1463 / DSM 18972 / AmH).